We begin with the raw amino-acid sequence, 159 residues long: U1 small nuclear ribonucleoprotein C (159 aa).

The segment at 4-36 (FYCDYCDTYLTHDSPSVRKTHCSGRKHKENVKD) adopts a Matrin-type zinc-finger fold. Phosphotyrosine is present on Y8. S17 is modified (phosphoserine). At K52 the chain carries N6-acetyllysine. The disordered stretch occupies residues 62 to 96 (IPPAPFSAPPPAGAMIPPPPSLPGPPRPGMMPAPH). Over residues 63 to 92 (PPAPFSAPPPAGAMIPPPPSLPGPPRPGMM) the composition is skewed to pro residues.

Belongs to the U1 small nuclear ribonucleoprotein C family. As to quaternary structure, component of the U1 snRNP. The U1 snRNP is composed of the U1 snRNA and the 7 core Sm proteins SNRPB, SNRPD1, SNRPD2, SNRPD3, SNRPE, SNRPF and SNRPG that assemble in a heptameric protein ring on the Sm site of the small nuclear RNA to form the core snRNP, and at least 3 U1 snRNP-specific proteins SNRNP70/U1-70K, SNRPA/U1-A and SNRPC/U1-C. SNRPC/U1-C interacts with U1 snRNA and the 5' splice-site region of the pre-mRNA. Interacts (via N-terminus) with TIA1 (via C-terminus); thereby promoting spliceosomal U1 snRNP recruitment to 5' splice sites.

The protein localises to the nucleus. Functionally, component of the spliceosomal U1 snRNP, which is essential for recognition of the pre-mRNA 5' splice-site and the subsequent assembly of the spliceosome. SNRPC/U1-C is directly involved in initial 5' splice-site recognition for both constitutive and regulated alternative splicing. The interaction with the 5' splice-site seems to precede base-pairing between the pre-mRNA and the U1 snRNA. Stimulates commitment or early (E) complex formation by stabilizing the base pairing of the 5' end of the U1 snRNA and the 5' splice-site region. The protein is U1 small nuclear ribonucleoprotein C of Rattus norvegicus (Rat).